The sequence spans 535 residues: Bifunctional purine biosynthesis protein PurH (535 aa).

Positions 6-151 constitute an MGS-like domain; that stretch reads TRLPIRRALI…KNHKDVAIVV (146 aa).

Belongs to the PurH family.

It carries out the reaction (6R)-10-formyltetrahydrofolate + 5-amino-1-(5-phospho-beta-D-ribosyl)imidazole-4-carboxamide = 5-formamido-1-(5-phospho-D-ribosyl)imidazole-4-carboxamide + (6S)-5,6,7,8-tetrahydrofolate. It catalyses the reaction IMP + H2O = 5-formamido-1-(5-phospho-D-ribosyl)imidazole-4-carboxamide. Its pathway is purine metabolism; IMP biosynthesis via de novo pathway; 5-formamido-1-(5-phospho-D-ribosyl)imidazole-4-carboxamide from 5-amino-1-(5-phospho-D-ribosyl)imidazole-4-carboxamide (10-formyl THF route): step 1/1. The protein operates within purine metabolism; IMP biosynthesis via de novo pathway; IMP from 5-formamido-1-(5-phospho-D-ribosyl)imidazole-4-carboxamide: step 1/1. The sequence is that of Bifunctional purine biosynthesis protein PurH from Pseudomonas fluorescens (strain SBW25).